Here is a 681-residue protein sequence, read N- to C-terminus: Transmembrane protein 214-A (681 aa).

Disordered stretches follow at residues methionine 1–proline 41 and lysine 58–glutamine 99. N-linked (GlcNAc...) asparagine glycosylation is found at asparagine 300 and asparagine 324. The next 2 membrane-spanning stretches (helical) occupy residues glycine 471–tyrosine 491 and leucine 608–valine 628.

This sequence belongs to the TMEM214 family. Constitutively interacts with CASP4; required for the localization of procaspase 4 to the ER.

It is found in the endoplasmic reticulum membrane. In terms of biological role, critical mediator, in cooperation with CASP4, of endoplasmic reticulum-stress induced apoptosis. Required or the activation of CASP4 following endoplasmic reticulum stress. This chain is Transmembrane protein 214-A (tmem214-a), found in Xenopus laevis (African clawed frog).